The chain runs to 122 residues: Large ribosomal subunit protein uL18 (122 aa).

This sequence belongs to the universal ribosomal protein uL18 family. In terms of assembly, part of the 50S ribosomal subunit; part of the 5S rRNA/L5/L18/L25 subcomplex. Contacts the 5S and 23S rRNAs.

This is one of the proteins that bind and probably mediate the attachment of the 5S RNA into the large ribosomal subunit, where it forms part of the central protuberance. The protein is Large ribosomal subunit protein uL18 of Fervidobacterium nodosum (strain ATCC 35602 / DSM 5306 / Rt17-B1).